A 452-amino-acid polypeptide reads, in one-letter code: Membrane-bound acylglycerophosphatidylinositol O-acyltransferase mboa-7 (452 aa).

Transmembrane regions (helical) follow at residues 4-24 (IIGL…FSFA), 53-73 (PRIA…AFAP), 79-99 (FYVF…HYFL), and 104-124 (VASH…GITF). The N-linked (GlcNAc...) asparagine glycan is linked to N137. 3 helical membrane passes run 153–173 (FAYF…YQML), 220–240 (AIWE…FVVF), and 244–264 (VYSA…GIYP). N-linked (GlcNAc...) asparagine glycosylation occurs at N319. H350 is an active-site residue. The helical transmembrane segment at 354-374 (AGYFMSFGVVAMCAILEDVIF) threads the bilayer. N-linked (GlcNAc...) asparagine glycosylation is present at N414. Residues 421–441 (FWSSIYYWLPLLCVPFYIYSV) traverse the membrane as a helical segment.

Belongs to the membrane-bound acyltransferase family.

Its subcellular location is the membrane. The enzyme catalyses a 1-acyl-sn-glycero-3-phospho-(1D-myo-inositol) + an acyl-CoA = a 1,2-diacyl-sn-glycero-3-phospho-(1D-myo-inositol) + CoA. The catalysed reaction is a fatty acyl-[ACP] + a 1-acyl-sn-glycero-3-phosphate = a 1,2-diacyl-sn-glycero-3-phosphate + holo-[ACP]. It functions in the pathway lipid metabolism; phospholipid metabolism. In terms of biological role, acyltransferase which mediates the conversion of lysophosphatidylinositol (1-acylglycerophosphatidylinositol or LPI) into phosphatidylinositol (1,2-diacyl-sn-glycero-3-phosphoinositol or PI) (LPIAT activity). Prefers arachidonoyl-CoA or eicosapentaenoic acid (EPA) as the acyl donor. Prefers sn-2-LPI rather than sn-1-LPI as the acyl acceptor. Lysophospholipid acyltransferases (LPLATs) catalyze the reacylation step of the phospholipid remodeling pathway also known as the Lands cycle. In Caenorhabditis briggsae, this protein is Membrane-bound acylglycerophosphatidylinositol O-acyltransferase mboa-7.